The sequence spans 292 residues: GTP cyclohydrolase FolE2 (292 aa).

The protein belongs to the GTP cyclohydrolase IV family.

It catalyses the reaction GTP + H2O = 7,8-dihydroneopterin 3'-triphosphate + formate + H(+). Its pathway is cofactor biosynthesis; 7,8-dihydroneopterin triphosphate biosynthesis; 7,8-dihydroneopterin triphosphate from GTP: step 1/1. In terms of biological role, converts GTP to 7,8-dihydroneopterin triphosphate. This chain is GTP cyclohydrolase FolE2, found in Staphylococcus saprophyticus subsp. saprophyticus (strain ATCC 15305 / DSM 20229 / NCIMB 8711 / NCTC 7292 / S-41).